Consider the following 555-residue polypeptide: 2-succinyl-5-enolpyruvyl-6-hydroxy-3-cyclohexene-1-carboxylate synthase (555 aa).

Belongs to the TPP enzyme family. MenD subfamily. In terms of assembly, homodimer. Mg(2+) serves as cofactor. Mn(2+) is required as a cofactor. Requires thiamine diphosphate as cofactor.

The enzyme catalyses isochorismate + 2-oxoglutarate + H(+) = 5-enolpyruvoyl-6-hydroxy-2-succinyl-cyclohex-3-ene-1-carboxylate + CO2. Its pathway is quinol/quinone metabolism; 1,4-dihydroxy-2-naphthoate biosynthesis; 1,4-dihydroxy-2-naphthoate from chorismate: step 2/7. The protein operates within quinol/quinone metabolism; menaquinone biosynthesis. In terms of biological role, catalyzes the thiamine diphosphate-dependent decarboxylation of 2-oxoglutarate and the subsequent addition of the resulting succinic semialdehyde-thiamine pyrophosphate anion to isochorismate to yield 2-succinyl-5-enolpyruvyl-6-hydroxy-3-cyclohexene-1-carboxylate (SEPHCHC). The chain is 2-succinyl-5-enolpyruvyl-6-hydroxy-3-cyclohexene-1-carboxylate synthase from Cronobacter sakazakii (strain ATCC BAA-894) (Enterobacter sakazakii).